The following is a 210-amino-acid chain: Molybdenum cofactor guanylyltransferase (210 aa).

Residues 14 to 16, Lys27, Asn55, Asp73, and Asp108 contribute to the GTP site; that span reads LAG. Asp108 is a Mg(2+) binding site.

The protein belongs to the MobA family. As to quaternary structure, monomer. The cofactor is Mg(2+).

The protein localises to the cytoplasm. The enzyme catalyses Mo-molybdopterin + GTP + H(+) = Mo-molybdopterin guanine dinucleotide + diphosphate. In terms of biological role, transfers a GMP moiety from GTP to Mo-molybdopterin (Mo-MPT) cofactor (Moco or molybdenum cofactor) to form Mo-molybdopterin guanine dinucleotide (Mo-MGD) cofactor. This chain is Molybdenum cofactor guanylyltransferase, found in Rhodopseudomonas palustris (strain BisB5).